The primary structure comprises 178 residues: Large ribosomal subunit protein bL17 (178 aa).

Over residues 126–139 (DRARRVAASKKAEE) the composition is skewed to basic and acidic residues. The disordered stretch occupies residues 126–178 (DRARRVAASKKAEEQAPAAEAEEQAPAAEAEAPAADAAAEAKADEAAEDKKDA). Residues 140-163 (QAPAAEAEEQAPAAEAEAPAADAA) are compositionally biased toward low complexity. Residues 164–178 (AEAKADEAAEDKKDA) show a composition bias toward basic and acidic residues.

The protein belongs to the bacterial ribosomal protein bL17 family. In terms of assembly, part of the 50S ribosomal subunit. Contacts protein L32.

This is Large ribosomal subunit protein bL17 from Nocardia farcinica (strain IFM 10152).